The sequence spans 266 residues: Glucosamine-6-phosphate deaminase (266 aa).

Aspartate 72 functions as the Proton acceptor; for enolization step in the catalytic mechanism. Aspartate 141 functions as the For ring-opening step in the catalytic mechanism. Histidine 143 functions as the Proton acceptor; for ring-opening step in the catalytic mechanism. Glutamate 148 serves as the catalytic For ring-opening step.

Belongs to the glucosamine/galactosamine-6-phosphate isomerase family. NagB subfamily. Homohexamer.

It carries out the reaction alpha-D-glucosamine 6-phosphate + H2O = beta-D-fructose 6-phosphate + NH4(+). The protein operates within amino-sugar metabolism; N-acetylneuraminate degradation; D-fructose 6-phosphate from N-acetylneuraminate: step 5/5. With respect to regulation, allosterically activated by N-acetylglucosamine 6-phosphate (GlcNAc6P). In terms of biological role, catalyzes the reversible isomerization-deamination of glucosamine 6-phosphate (GlcN6P) to form fructose 6-phosphate (Fru6P) and ammonium ion. This Vibrio campbellii (strain ATCC BAA-1116) protein is Glucosamine-6-phosphate deaminase.